The sequence spans 478 residues: ATP synthase subunit beta (478 aa).

158 to 165 (GGAGVGKT) contacts ATP.

Belongs to the ATPase alpha/beta chains family. As to quaternary structure, F-type ATPases have 2 components, CF(1) - the catalytic core - and CF(0) - the membrane proton channel. CF(1) has five subunits: alpha(3), beta(3), gamma(1), delta(1), epsilon(1). CF(0) has three main subunits: a(1), b(2) and c(9-12). The alpha and beta chains form an alternating ring which encloses part of the gamma chain. CF(1) is attached to CF(0) by a central stalk formed by the gamma and epsilon chains, while a peripheral stalk is formed by the delta and b chains.

Its subcellular location is the cell inner membrane. It catalyses the reaction ATP + H2O + 4 H(+)(in) = ADP + phosphate + 5 H(+)(out). Functionally, produces ATP from ADP in the presence of a proton gradient across the membrane. The catalytic sites are hosted primarily by the beta subunits. The protein is ATP synthase subunit beta of Rhizobium johnstonii (strain DSM 114642 / LMG 32736 / 3841) (Rhizobium leguminosarum bv. viciae).